A 230-amino-acid chain; its full sequence is Phosphoribosylaminoimidazole-succinocarboxamide synthase (230 aa).

It belongs to the SAICAR synthetase family.

It carries out the reaction 5-amino-1-(5-phospho-D-ribosyl)imidazole-4-carboxylate + L-aspartate + ATP = (2S)-2-[5-amino-1-(5-phospho-beta-D-ribosyl)imidazole-4-carboxamido]succinate + ADP + phosphate + 2 H(+). It participates in purine metabolism; IMP biosynthesis via de novo pathway; 5-amino-1-(5-phospho-D-ribosyl)imidazole-4-carboxamide from 5-amino-1-(5-phospho-D-ribosyl)imidazole-4-carboxylate: step 1/2. The chain is Phosphoribosylaminoimidazole-succinocarboxamide synthase (purC) from Thermotoga maritima (strain ATCC 43589 / DSM 3109 / JCM 10099 / NBRC 100826 / MSB8).